The primary structure comprises 169 residues: MITAASLLTALAVFIARLCDVCLGTIRHVMIIRGRRLLAFSVAFFEAVIWVYAVSRVIGAVSDPVTSLAFALGFASGTYAGITLEGVFKIGEQVVRVFTREGGPVACTLRDAGFRVTVFDGQGRDGVVNLLFVQVRRRQAGEVARIARNVDPECYMVVDDIRKTYTVGG.

Helical transmembrane passes span 1-21, 38-58, and 68-88; these read MITA…LCDV, LAFS…SRVI, and LAFA…EGVF.

The protein belongs to the UPF0316 family.

The protein localises to the cell membrane. The polypeptide is UPF0316 protein Dde_2502 (Oleidesulfovibrio alaskensis (strain ATCC BAA-1058 / DSM 17464 / G20) (Desulfovibrio alaskensis)).